The chain runs to 217 residues: Homeobox protein Hox-B7 (217 aa).

Residues 126–131 carry the Antp-type hexapeptide motif; that stretch reads IYPWMR. The homeobox DNA-binding region spans 137–196; the sequence is RKRGRQTYTRYQTLELEKEFHYNRYLTRRRRIEIAHTLCLTERQIKIWFQNRRMKWKKEN. A disordered region spans residues 192–217; it reads WKKENKTSGPGTTGQDKAEAEEEEEE.

The protein belongs to the Antp homeobox family. As to quaternary structure, forms a DNA-binding heterodimer with transcription factor PBX1.

It localises to the nucleus. Its function is as follows. Sequence-specific transcription factor which is part of a developmental regulatory system that provides cells with specific positional identities on the anterior-posterior axis. This is Homeobox protein Hox-B7 (Hoxb7) from Mus musculus (Mouse).